The sequence spans 593 residues: Probable translation initiation factor IF-2 (593 aa).

Positions 7–221 (IRTPIVCVMG…VLIGLAQRYM (215 aa)) constitute a tr-type G domain. Positions 16 to 23 (GHVDHGKT) are G1. A GTP-binding site is contributed by 16–23 (GHVDHGKT). The G2 stretch occupies residues 41–45 (EITQH). The G3 stretch occupies residues 77-80 (DTPG). Residues 77 to 81 (DTPGH) and 131 to 134 (NKVD) contribute to the GTP site. Positions 131-134 (NKVD) are G4. The interval 199-201 (SAL) is G5.

This sequence belongs to the TRAFAC class translation factor GTPase superfamily. Classic translation factor GTPase family. IF-2 subfamily.

Functionally, function in general translation initiation by promoting the binding of the formylmethionine-tRNA to ribosomes. Seems to function along with eIF-2. In Methanoculleus marisnigri (strain ATCC 35101 / DSM 1498 / JR1), this protein is Probable translation initiation factor IF-2.